The following is a 398-amino-acid chain: O-methyltransferase aoiO (398 aa).

An S-adenosyl-L-methionine-binding site is contributed by Asp251. His299 serves as the catalytic Proton acceptor.

It belongs to the class I-like SAM-binding methyltransferase superfamily. Cation-independent O-methyltransferase family.

In terms of biological role, O-methyltransferase; part of the gene cluster that mediates the biosynthesis of a methylated derivative of known natural products orthosporin and diaporthin. Seems not to be involved in the biosynthesis of the identified final product of the pathway and its function has still to be determined. This Aspergillus oryzae (strain ATCC 42149 / RIB 40) (Yellow koji mold) protein is O-methyltransferase aoiO.